The chain runs to 398 residues: Phosphoglycerate kinase (398 aa).

Substrate is bound by residues 21–23, R36, 59–62, R119, and R157; these read DFN and HLGR. ATP is bound by residues K208, G296, E327, and 354–357; that span reads GGDS.

Belongs to the phosphoglycerate kinase family. In terms of assembly, monomer.

It localises to the cytoplasm. The enzyme catalyses (2R)-3-phosphoglycerate + ATP = (2R)-3-phospho-glyceroyl phosphate + ADP. The protein operates within carbohydrate degradation; glycolysis; pyruvate from D-glyceraldehyde 3-phosphate: step 2/5. In Streptococcus agalactiae serotype III (strain NEM316), this protein is Phosphoglycerate kinase.